The sequence spans 429 residues: Ribosomal RNA small subunit methyltransferase B (429 aa).

S-adenosyl-L-methionine-binding positions include 254–260 (CAAPGGK), Asp277, Asp303, and Asp322. Cys375 acts as the Nucleophile in catalysis. The tract at residues 397–419 (ALSETGTPDQPGQQNLPGGEEGD) is disordered. Positions 400–412 (ETGTPDQPGQQNL) are enriched in polar residues.

This sequence belongs to the class I-like SAM-binding methyltransferase superfamily. RsmB/NOP family.

Its subcellular location is the cytoplasm. The enzyme catalyses cytidine(967) in 16S rRNA + S-adenosyl-L-methionine = 5-methylcytidine(967) in 16S rRNA + S-adenosyl-L-homocysteine + H(+). In terms of biological role, specifically methylates the cytosine at position 967 (m5C967) of 16S rRNA. The polypeptide is Ribosomal RNA small subunit methyltransferase B (Salmonella agona (strain SL483)).